The sequence spans 115 residues: NADH-ubiquinone oxidoreductase chain 3 (115 aa).

Helical transmembrane passes span 4–24, 55–75, and 86–106; these read LVTMLINTTLSFVLILIAFWL, FFLVAITFLLFDLEIALLLPM, and TMTLTAFILLSVLALGLAYEW.

This sequence belongs to the complex I subunit 3 family. Core subunit of respiratory chain NADH dehydrogenase (Complex I) which is composed of 45 different subunits. Interacts with TMEM186. Interacts with TMEM242.

The protein resides in the mitochondrion inner membrane. The catalysed reaction is a ubiquinone + NADH + 5 H(+)(in) = a ubiquinol + NAD(+) + 4 H(+)(out). Core subunit of the mitochondrial membrane respiratory chain NADH dehydrogenase (Complex I) which catalyzes electron transfer from NADH through the respiratory chain, using ubiquinone as an electron acceptor. Essential for the catalytic activity of complex I. The polypeptide is NADH-ubiquinone oxidoreductase chain 3 (Nelsonia neotomodon (Diminutive woodrat)).